A 222-amino-acid chain; its full sequence is NADH dehydrogenase [ubiquinone] iron-sulfur protein 8-B, mitochondrial (222 aa).

2 consecutive 4Fe-4S ferredoxin-type domains span residues 114-143 (RRYP…IEAE) and 153-182 (TRYD…EGPN). [4Fe-4S] cluster is bound by residues Cys123, Cys126, Cys129, Cys133, Cys162, Cys165, Cys168, and Cys172.

The protein belongs to the complex I 23 kDa subunit family. In terms of assembly, complex I is composed of at least 49 different subunits. This is a component of the iron-sulfur (IP) fragment of the enzyme. Requires [4Fe-4S] cluster as cofactor.

The protein resides in the mitochondrion. It carries out the reaction a ubiquinone + NADH + 5 H(+)(in) = a ubiquinol + NAD(+) + 4 H(+)(out). In terms of biological role, core subunit of the mitochondrial membrane respiratory chain NADH dehydrogenase (Complex I) that is believed to belong to the minimal assembly required for catalysis. Complex I functions in the transfer of electrons from NADH to the respiratory chain. The immediate electron acceptor for the enzyme is believed to be ubiquinone. May donate electrons to ubiquinone. The chain is NADH dehydrogenase [ubiquinone] iron-sulfur protein 8-B, mitochondrial from Arabidopsis thaliana (Mouse-ear cress).